A 422-amino-acid polypeptide reads, in one-letter code: Gamma-glutamyl phosphate reductase (422 aa).

This sequence belongs to the gamma-glutamyl phosphate reductase family.

The protein resides in the cytoplasm. The catalysed reaction is L-glutamate 5-semialdehyde + phosphate + NADP(+) = L-glutamyl 5-phosphate + NADPH + H(+). It participates in amino-acid biosynthesis; L-proline biosynthesis; L-glutamate 5-semialdehyde from L-glutamate: step 2/2. Catalyzes the NADPH-dependent reduction of L-glutamate 5-phosphate into L-glutamate 5-semialdehyde and phosphate. The product spontaneously undergoes cyclization to form 1-pyrroline-5-carboxylate. The polypeptide is Gamma-glutamyl phosphate reductase (Saccharophagus degradans (strain 2-40 / ATCC 43961 / DSM 17024)).